A 295-amino-acid chain; its full sequence is Inward rectifier potassium channel Kirbac3.1 (295 aa).

The Cytoplasmic portion of the chain corresponds to 1-47 (MTGGMKPPARKPRILNSDGSSNITRLGLEKRGWLDDHYHDLLTVSWP). The helical transmembrane segment at 48-69 (VFITLITGLYLVTNALFALAYL) threads the bilayer. The Extracellular segment spans residues 70–82 (ACGDVIENARPGS). An intramembrane region (helical; Pore-forming) is located at residues 83–95 (FTDAFFFSVQTMA). The Selectivity filter signature appears at 96–100 (TIGYG). Residues 107–131 (PLANTLVTLEALCGMLGLAVAASLI) form a helical membrane-spanning segment. The Cytoplasmic portion of the chain corresponds to 132–295 (YARFTRPTAG…DLGKFHEIAQ (164 aa)).

The protein belongs to the inward rectifier-type potassium channel (TC 1.A.2.1) family. KCNJ11 subfamily. As to quaternary structure, homotetramer.

Its subcellular location is the membrane. In terms of biological role, inward rectifier potassium channel that mediates potassium uptake into the cell. Inward rectifier potassium channels are characterized by a greater tendency to allow potassium to flow into the cell rather than out of it. The inward rectification may be achieved by the blockage of outward current by cytoplasmic divalent metal ions and polyamines. Complements an E.coli mutant that is defective in K(+) uptake. The protein is Inward rectifier potassium channel Kirbac3.1 of Paramagnetospirillum magnetotacticum (Aquaspirillum magnetotacticum).